Reading from the N-terminus, the 20-residue chain is U1-poneritoxin-Ni1a (20 aa).

At K20 the chain carries Lysine amide.

It belongs to the non-disulfide-bridged peptide (NDBP) superfamily. Medium-length antimicrobial peptide (group 3) family. Ponericin-W subfamily. As to expression, expressed by the venom gland.

It is found in the secreted. It localises to the target cell membrane. Has activity against Gram-positive bacteria. Has insecticidal and hemolytic activities. May act by disrupting the integrity of the bacterial cell membrane. The chain is U1-poneritoxin-Ni1a from Neoponera inversa (Ant).